The primary structure comprises 140 residues: Small ribosomal subunit protein uS9 (140 aa).

This sequence belongs to the universal ribosomal protein uS9 family.

The chain is Small ribosomal subunit protein uS9 from Desulfurococcus amylolyticus (strain DSM 18924 / JCM 16383 / VKM B-2413 / 1221n) (Desulfurococcus kamchatkensis).